The primary structure comprises 698 residues: Probable microcin-H47 secretion/processing ATP-binding protein MchF (698 aa).

One can recognise a Peptidase C39 domain in the interval 26-145 (QTETAECGLA…RYFTGIALEV (120 aa)). Residue cysteine 32 is part of the active site. A run of 5 helical transmembrane segments spans residues 33-53 (GLAC…LISL), 90-110 (LGAL…VVLV), 289-311 (TCVV…MLLY), 315-337 (LTWI…YGYY), and 397-417 (LLFG…ILWL). Residues 176 to 458 (LAKIFCLSVV…LTSFLLQLRI (283 aa)) form the ABC transmembrane type-1 domain. The 207-residue stretch at 492 to 698 (LETTDLSYRY…LRTVDRIISI (207 aa)) folds into the ABC transporter domain. Position 526 to 533 (526 to 533 (GASGAGKT)) interacts with ATP.

This sequence belongs to the ABC transporter superfamily.

The protein localises to the cell membrane. In terms of biological role, probably involved, in conjunction with MchE, in the secretion of microcin H47. In Escherichia coli, this protein is Probable microcin-H47 secretion/processing ATP-binding protein MchF (mchF).